A 723-amino-acid polypeptide reads, in one-letter code: Solute carrier organic anion transporter family member 4A1 (723 aa).

Topologically, residues 1–102 are cytoplasmic; sequence MPQHAMGDTH…KCLQVFNTPK (102 aa). The disordered stretch occupies residues 23-64; that stretch reads SSATDSGCDTPPSSRASPASLRSAHGTLGSSSQPLFEPQAEK. The span at 33 to 46 shows a compositional bias: low complexity; it reads PPSSRASPASLRSA. 3 positions are modified to phosphoserine: serine 39, serine 42, and serine 45. Residues 103–123 form a helical membrane-spanning segment; it reads GFLFFLCAASFLQGMTVNGFI. The Extracellular portion of the chain corresponds to 124 to 142; that stretch reads NTVITSIERRFDLHSYQSG. A helical membrane pass occupies residues 143–163; the sequence is LIASSYDIAACLCLTFVSYFG. The Cytoplasmic segment spans residues 164-169; sequence GNGHKP. Residues 170-194 form a helical membrane-spanning segment; the sequence is RWLGWGVLVLGIGSLVFALPHFTAG. The Extracellular portion of the chain corresponds to 195 to 224; the sequence is RYEVEMDEGLGTGTCLTNQSHVECKDSASG. A glycan (N-linked (GlcNAc...) asparagine) is linked at asparagine 212. Residues 225–255 traverse the membrane as a helical segment; the sequence is LSNYRLIFMLGQLLHGVGATPLYTLGVTYLD. Residues 256–274 are Cytoplasmic-facing; sequence ENVKSSYSPIYIAIFYTAA. The chain crosses the membrane as a helical span at residues 275–295; the sequence is ILGPAAGYLIGGAMLNVYTEV. Over 296 to 309 the chain is Extracellular; sequence GQRTELTTDSPLWV. A helical membrane pass occupies residues 310-334; it reads GAWWIGFLGTGIAAFLIAIPILGYP. The Cytoplasmic segment spans residues 335-380; that stretch reads RQLPGSQRYVVMRAAETQQLKDHSRGAVSNPAFGKTVRDLPLSIWL. Residues 381–402 form a helical membrane-spanning segment; that stretch reads LLRNPTFILLCLAGATEATLIA. Topologically, residues 403-422 are extracellular; that stretch reads GMSTFGPKFFEAQFSLSASE. A helical transmembrane segment spans residues 423–446; that stretch reads AATLFGYLVVPAGGGGTLLGGFLV. Over 447 to 450 the chain is Cytoplasmic; it reads NKFK. Residues 451–473 form a helical membrane-spanning segment; the sequence is LRGSGIIRFCLFCTLTSLLAFFV. At 474–582 the chain is on the extracellular side; sequence FLMHCPNVHM…ASTCQSKPFL (109 aa). A Kazal-like domain is found at 500–557; the sequence is LDLKAACNAIYCCQPKHYSPLCGSDGTMYYSPCYAGCPADAETDLGGQKVYRGCSCIL. 2 disulfides stabilise this stretch: cysteine 506–cysteine 536 and cysteine 521–cysteine 555. N-linked (GlcNAc...) asparagine glycosylation is present at asparagine 566. Residues 583–605 traverse the membrane as a helical segment; the sequence is LVLVFVVIIFTFLSSIPALTATL. The Cytoplasmic portion of the chain corresponds to 606 to 614; the sequence is RCVSDRQRS. A helical membrane pass occupies residues 615–640; it reads FALGIQWIVVRTLGSIPGPIAFGWVI. Topologically, residues 641-673 are extracellular; that stretch reads DKACLLWQDQCGHQGSCFVYENEAMSRYMLIAG. Residues 674-691 traverse the membrane as a helical segment; sequence LTFKVLGFLFFVAAYFLY. At 692–723 the chain is on the cytoplasmic side; that stretch reads KSPSVSSDGLEASLPSQSSASDSPTEQLQSNV. Residues 700 to 723 are disordered; the sequence is GLEASLPSQSSASDSPTEQLQSNV. The span at 701–723 shows a compositional bias: low complexity; the sequence is LEASLPSQSSASDSPTEQLQSNV.

The protein belongs to the organo anion transporter (TC 2.A.60) family.

The protein resides in the cell membrane. The enzyme catalyses 3,3',5-triiodo-L-thyronine(out) + L-glutamate(in) = 3,3',5-triiodo-L-thyronine(in) + L-glutamate(out). It catalyses the reaction L-thyroxine(out) + L-glutamate(in) = L-thyroxine(in) + L-glutamate(out). The catalysed reaction is estrone 3-sulfate(out) + L-glutamate(in) = estrone 3-sulfate(in) + L-glutamate(out). It carries out the reaction taurocholate(out) + L-glutamate(in) = taurocholate(in) + L-glutamate(out). The enzyme catalyses 3,3',5-triiodo-L-thyronine(out) = 3,3',5-triiodo-L-thyronine(in). It catalyses the reaction L-thyroxine(out) = L-thyroxine(in). The catalysed reaction is 3,3',5'-triiodo-L-thyronine(out) = 3,3',5'-triiodo-L-thyronine(in). It carries out the reaction estrone 3-sulfate(out) = estrone 3-sulfate(in). The enzyme catalyses 17beta-estradiol 17-O-(beta-D-glucuronate)(out) = 17beta-estradiol 17-O-(beta-D-glucuronate)(in). It catalyses the reaction taurocholate(out) = taurocholate(in). The catalysed reaction is prostaglandin E2(out) = prostaglandin E2(in). Its function is as follows. Organic anion antiporter with apparent broad substrate specificity. Recognizes various substrates including thyroid hormones 3,3',5-triiodo-L-thyronine (T3), L-thyroxine (T4) and 3,3',5'-triiodo-L-thyronine (rT3), conjugated steroids such as estrone 3-sulfate and estradiol 17-beta glucuronide, bile acids such as taurocholate and prostanoids such as prostaglandin E2, likely operating in a tissue-specific manner. May be involved in uptake of metabolites from the circulation into organs such as kidney, liver or placenta. Possibly drives the selective transport of thyroid hormones and estrogens coupled to an outward glutamate gradient across the microvillous membrane of the placenta. The transport mechanism, its electrogenicity and potential tissue-specific counterions remain to be elucidated. This chain is Solute carrier organic anion transporter family member 4A1 (Slco4a1), found in Mus musculus (Mouse).